A 336-amino-acid polypeptide reads, in one-letter code: Nuclear egress protein 2 (336 aa).

Topologically, residues 1–315 (MASPEERLLD…AWRYSWRATP (315 aa)) are perinuclear space. 2 disordered regions span residues 193 to 221 (RSGQ…GCLG) and 277 to 297 (RTRE…VPPE). Residues 277 to 288 (RTRETRRMRGSH) are compositionally biased toward basic residues. The chain crosses the membrane as a helical span at residues 316–333 (YLARVLAVTAVALLLMFL). Topologically, residues 334–336 (RWT) are nuclear.

Belongs to the herpesviridae NEC2 protein family. As to quaternary structure, forms a heterodimeric viral nuclear egress complex (NEC) with NEC1. Interacts with host IKBKE; this interaction inhibits host IKBKE kinase activity and IRF3 nuclear translocation. In terms of processing, phosphorylated.

Its subcellular location is the host nucleus inner membrane. The protein resides in the host cytoplasm. It localises to the host perinuclear region. Its function is as follows. Plays an essential role in virion nuclear egress, the first step of virion release from infected cell. Within the host nucleus, NEC1 interacts with the newly formed capsid through the vertexes and directs it to the inner nuclear membrane by associating with NEC2. Induces the budding of the capsid at the inner nuclear membrane as well as its envelopment into the perinuclear space. There, the NEC1/NEC2 complex promotes the fusion of the enveloped capsid with the outer nuclear membrane and the subsequent release of the viral capsid into the cytoplasm where it will reach the secondary budding sites in the host Golgi or trans-Golgi network. Inhibits host IKBKE and IRF3, thereby impairing type I IFN signaling. The chain is Nuclear egress protein 2 from Homo sapiens (Human).